The primary structure comprises 321 residues: tRNA uridine(34) hydroxylase (321 aa).

Residues 123–217 (SDPDVTVIDT…YLEEVPEGNS (95 aa)) enclose the Rhodanese domain. Cys177 functions as the Cysteine persulfide intermediate in the catalytic mechanism. Residues 294 to 308 (RKGELHIGDRADIAK) are compositionally biased toward basic and acidic residues. Residues 294–321 (RKGELHIGDRADIAKSRTTQGAPSADGE) are disordered.

This sequence belongs to the TrhO family.

It catalyses the reaction uridine(34) in tRNA + AH2 + O2 = 5-hydroxyuridine(34) in tRNA + A + H2O. Functionally, catalyzes oxygen-dependent 5-hydroxyuridine (ho5U) modification at position 34 in tRNAs. The protein is tRNA uridine(34) hydroxylase of Teredinibacter turnerae (strain ATCC 39867 / T7901).